A 237-amino-acid polypeptide reads, in one-letter code: Splicing factor U2AF 35 kDa subunit (237 aa).

An N-acetylalanine modification is found at alanine 2. A C3H1-type 1 zinc finger spans residues 12 to 40 (EKDKVNCSFYFKIGACRHGDRCSRLHNKP). Residue lysine 39 is modified to N6-methyllysine. Phosphoserine is present on residues serine 61 and serine 145. One can recognise an RRM domain in the interval 65–147 (LRCAVSDVEM…QPIHAELSPV (83 aa)). A C3H1-type 2 zinc finger spans residues 149–176 (DFREACCRQYEMGECTRGGFCNFMHLKP). Arginine 165 bears the Omega-N-methylarginine mark. The segment at 185–237 (LYGRRRKKHRSRSRSRERRSRSRDRGRGGGGGGGGGRERDRRRSRDRERSGRF) is disordered. Basic residues predominate over residues 188-208 (RRRKKHRSRSRSRERRSRSRD). The span at 220–237 (GRERDRRRSRDRERSGRF) shows a compositional bias: basic and acidic residues.

The protein belongs to the splicing factor SR family. As to quaternary structure, identified in the spliceosome C complex. Heterodimer with U2AF2. Interacts (via RS domain) with PHF5A (via N-terminus). Interacts with ZRANB2. Interacts with SDE2. Interacts with SF3B1.

The protein localises to the nucleus. It localises to the nucleus speckle. Plays a critical role in both constitutive and enhancer-dependent splicing by mediating protein-protein interactions and protein-RNA interactions required for accurate 3'-splice site selection. Recruits U2 snRNP to the branch point. Directly mediates interactions between U2AF2 and proteins bound to the enhancers and thus may function as a bridge between U2AF2 and the enhancer complex to recruit it to the adjacent intron. The sequence is that of Splicing factor U2AF 35 kDa subunit (U2AF1) from Bos taurus (Bovine).